We begin with the raw amino-acid sequence, 486 residues long: Malonate-semialdehyde dehydrogenase 1 (486 aa).

Residues Phe154, Lys178, Glu181, Arg182, and Ser231 each contribute to the NAD(+) site. Cys286 functions as the Nucleophile in the catalytic mechanism. Glu386 serves as a coordination point for NAD(+).

It belongs to the aldehyde dehydrogenase family. IolA subfamily. Homotetramer.

It catalyses the reaction 3-oxopropanoate + NAD(+) + CoA + H2O = hydrogencarbonate + acetyl-CoA + NADH + H(+). The enzyme catalyses 2-methyl-3-oxopropanoate + NAD(+) + CoA + H2O = propanoyl-CoA + hydrogencarbonate + NADH + H(+). The protein operates within polyol metabolism; myo-inositol degradation into acetyl-CoA; acetyl-CoA from myo-inositol: step 7/7. Functionally, catalyzes the oxidation of malonate semialdehyde (MSA) and methylmalonate semialdehyde (MMSA) into acetyl-CoA and propanoyl-CoA, respectively. Is involved in a myo-inositol catabolic pathway. Bicarbonate, and not CO2, is the end-product of the enzymatic reaction. The sequence is that of Malonate-semialdehyde dehydrogenase 1 from Bacillus anthracis.